We begin with the raw amino-acid sequence, 395 residues long: Serine/threonine-protein kinase BIK1 (395 aa).

The N-myristoyl glycine moiety is linked to residue G2. C4 carries S-palmitoyl cysteine lipidation. S26 is modified (phosphoserine). A Glycyl lysine isopeptide (Lys-Gly) (interchain with G-Cter in ubiquitin) cross-link involves residue K31. S32, S33, and S34 each carry phosphoserine. The residue at position 35 (T35) is a Phosphothreonine. A Glycyl lysine isopeptide (Lys-Gly) (interchain with G-Cter in ubiquitin) cross-link involves residue K41. The residue at position 42 (T42) is a Phosphothreonine. S48 carries the phosphoserine; by autocatalysis and BAK1 modification. Position 50 is a phosphothreonine (T50). A Phosphoserine; by autocatalysis modification is found at S54. T56 carries the phosphothreonine; by autocatalysis modification. T64 is modified (phosphothreonine). The Protein kinase domain occupies 67-356 (FRPDSVIGEG…RALQQLQDNL (290 aa)). S71 is modified (phosphoserine; by autocatalysis and BAK1). Residue 73–81 (IGEGGFGCV) participates in ATP binding. Phosphoserine; by EFR is present on S89. The Required for physical interaction with and phosphorylation of downstream signaling proteins (e.g. WRKY33, WRKY50, WRKY51 and WRKY57) to activate EFR-mediated immune signaling signature appears at 89 to 90 (ST). T90 carries the post-translational modification Phosphothreonine; by EFR. K95 participates in a covalent cross-link: Glycyl lysine isopeptide (Lys-Gly) (interchain with G-Cter in ubiquitin). K105 serves as a coordination point for ATP. Residue T120 is modified to Phosphothreonine; by EFR. S129 carries the phosphoserine; by autocatalysis modification. S129 is modified (phosphoserine; by EFR). Phosphotyrosine is present on Y150. Y168 is subject to Phosphotyrosine; by autocatalysis. Residues K170 and K186 each participate in a glycyl lysine isopeptide (Lys-Gly) (interchain with G-Cter in ubiquitin) cross-link. S193 is modified (phosphoserine). D202 (proton acceptor) is an active-site residue. S206 bears the Phosphoserine; by autocatalysis and BAK1 mark. Phosphotyrosine; by autocatalysis is present on Y214. Residue S219 is modified to Phosphoserine. Residue S233 is modified to Phosphoserine; by autocatalysis. At S236 the chain carries O-UMP-serine; by Xanthomonas campestris effector XopAC/AvrAC; alternate. Phosphoserine; by autocatalysis and BAK1; alternate is present on S236. An O-UMP-threonine; by Xanthomonas campestris effector XopAC/AvrAC; alternate modification is found at T237. A Phosphothreonine; by autocatalysis and BAK1; alternate modification is found at T237. At T242 the chain carries Phosphothreonine; by autocatalysis and BAK1. A Phosphotyrosine modification is found at Y243. Y250 carries the phosphotyrosine; by autocatalysis modification. S252 and S253 each carry phosphoserine; by autocatalysis. Residue K286 forms a Glycyl lysine isopeptide (Lys-Gly) (interchain with G-Cter in ubiquitin) linkage. The residue at position 314 (T314) is a Phosphothreonine; by autocatalysis. K337 participates in a covalent cross-link: Glycyl lysine isopeptide (Lys-Gly) (interchain with G-Cter in ubiquitin). A Phosphothreonine modification is found at T341. The span at 354-365 (DNLGKPSQTNPV) shows a compositional bias: polar residues. Positions 354–395 (DNLGKPSQTNPVKDTKKLGFKTGTTKSSEKRFTQKPFGRHLV) are disordered. K358 is covalently cross-linked (Glycyl lysine isopeptide (Lys-Gly) (interchain with G-Cter in ubiquitin)). A Phosphoserine; by autocatalysis and BAK1 modification is found at S360. Phosphothreonine; by autocatalysis and BAK1 is present on T362. A Glycyl lysine isopeptide (Lys-Gly) (interchain with G-Cter in ubiquitin) cross-link involves residue K366. Phosphothreonine; by autocatalysis and BAK1 is present on T368. 2 positions are modified to phosphothreonine: T375 and T377.

The protein belongs to the protein kinase superfamily. Ser/Thr protein kinase family. In terms of assembly, interacts with FLS2. Activation of FLS2 by flagellin (flg22) induces the dissociation of the complex. Interacts with BAK1. Interacts with the Xanthomonas campestris effector XopAC/AvrAC. Interacts with CPK28. Interacts with PEPR1. Interacts with PP2C38. Interacts with BRI1. Interacts with RBOHD. Binds to EFR when not phosphorylated at Ser-89 and Thr-90, in the absence of pathogen elicitor; dissociates upon pathogen-associated molecular pattern (PAMP)-triggered activation by EFR-mediated phosphorylation. Interacts directly with and phosphorylates WRKY transcription factors in the nucleus involved in the jasmonic acid (JA) and salicylic acid (SA) regulation (e.g. WRKY33, WRKY50, WRKY51 and WRKY57) to modulate defense hormones during plant immunity. Binds to ATL44/RHA3A and ATL45/RHA3B. Binds to SIK1 to be phosphorylated and stabilized. Post-translationally, phosphorylated by SIK1 to be stabilized. Phosphorylated by FLS2 and BAK1. Autophosphorylated. Autophosphorylation is reduced in presence of the Xanthomonas campestris effector XopAC/AvrAC. Phosphorylated, especially by EFR at Ser-89 and Thr-90, in response to the microbe-associated molecular pattern (MAMP) flg22. Phosphorylation in response to flg22 is abolished in presence of the Xanthomonas campestris effector XopAC/AvrAC. Phosphorylated at Ser-233, Ser-236 and Thr-237 by PEPR1. Phosphorylated at Tyr-150, Tyr-243 and Tyr-250. Tyrosine phosphorylation is required for BIK1 function in plant innate immunity. Uridylylated at Ser-236 and Thr-237 by the Xanthomonas campestris effector XopAC/AvrAC. This conceals conserved phosphorylation sites in the activation loop, reducing BIK1 kinase activity and consequently inhibiting downstream signaling. In terms of processing, monoubiquitinated by ATL44/RHA3A and ATL45/RHA3B following phosphorylation upon the recognition of microbe-associated molecular patterns (MAMPs, e.g. flg22) by pattern recognition receptors (PRRs), then released from the FLS2/BAK1 complex and internalized dynamically into endocytic compartments followed by the activation of immune signaling.

Its subcellular location is the cell membrane. It localises to the endosome membrane. It is found in the nucleus. The catalysed reaction is L-seryl-[protein] + ATP = O-phospho-L-seryl-[protein] + ADP + H(+). It carries out the reaction L-threonyl-[protein] + ATP = O-phospho-L-threonyl-[protein] + ADP + H(+). With respect to regulation, kinase activation is repressed by the phosphatase PP2C38. Functionally, plays a central role in immune responses. Required to activate the resistance responses to necrotrophic pathogens, including the regulation of defense hormone expression (e.g. jasmonic acid (JA) and salicylic acid (SA)). Phosphorylates FLS2 and BAK1. Involved in pathogen-associated molecular pattern (PAMP)-triggered immunity (PTI) signaling, including calcium signaling, and defense responses downstream of FLS2; upon PAMP recognition, first phosphorylated by FLS2 and SIK1 prior to being monoubiquitinated by ATL44/RHA3A and ATL45/RHA3B at the plasma membrane, then internalized dynamically into endocytic compartments together with FLS2. Acts additively with PBL1 in PTI defenses. Acts as a positive regulator of the PAMP flg22-induced increase of cytosolic calcium. Upon flg22 perception, phosphorylates and activates the calcium-permeable channel OSCA1.3, promoting stomatal closure. Phosphorylates the NADPH oxidase RBOHD at specific sites in a calcium-independent manner to enhance reactive oxygen species (ROS) generation upon flg22 perception. ROS production in response to flg22 controls stomatal movement and restriction of bacterial entry into leaf tissues. Seems not required for flg22-induced MAPK activation. Required for Pep1-induced defenses. Pep1 is an endogenous elicitor that potentiates PAMP-inducible plant responses. In association with PEPR1, acts downstream of the canonical ethylene signaling cascade to regulate ethylene responses. Involved in ethylene signaling. Destabilizes EIN3, the key transcription activator in ethylene signaling, and represses EIN3-dependent transcription. Acts as a negative regulator in brassinosteroid (BR) signaling. Functions in BR signaling by direct interaction with the BR receptor BRI1 cytosolic kinase domain. Required during SCOOP small peptides (e.g. SCOOP10 and SCOOP12) perception and signaling; receptor-like cytosolic kinases (RLCK) activated by BAK1/SERK3 and SERK4 coreceptors when associated with MIK2 upon the perception of SCOOP peptides. (Microbial infection) Xanthomonas campestris effector AvrAC/XopAC-mediated uridylylation prevents activation by phosphorylation at the same residues, thus affecting immune responses and reducing defense responses toward X.campestris, mediating avrAC/XopAC virulence functions. In Arabidopsis thaliana (Mouse-ear cress), this protein is Serine/threonine-protein kinase BIK1.